The following is a 387-amino-acid chain: MNLHEYQAKDLLESYGLKVQKGIVAHNPNEAAQAFDQLGGKFAVVKAQVHAGGRGKAGGVKVVKSSQEAREVAESLIGKNLVTFQTDAEGQPVNSVGVFEDVYPVTRELYLGAVVDRSSRKVTFMASTEGGVDIEEVAHNSPEKILKVEVDPLVGLQPFQAREVAFKLGLEGKQINDFVKTMLGAYKAFIECDFALFEINPLAVRENGEIVCVDGKINLDSNALYRHPKLLALRDKSQENAKELKASEHELNYVALKGNIGCMVNGAGLAMATMDIIQLYGGKPANFLDVGGGATKERVIEAFKLILDDENVKAVLINIFGGIVRCDMIAEAIIEAVKEVNVTVPVVVRLEGNNAEKGAKILADSGLKLIPADGLADAADKVVKSLG.

The ATP-grasp domain maps to 9 to 245 (KDLLESYGLK…KSQENAKELK (237 aa)). ATP-binding positions include K46, 53–55 (GRG), E100, Y103, and E108. Mg(2+) contacts are provided by N200 and D214. Substrate-binding positions include N265 and 322-324 (GIV).

This sequence belongs to the succinate/malate CoA ligase beta subunit family. Heterotetramer of two alpha and two beta subunits. Mg(2+) is required as a cofactor.

The enzyme catalyses succinate + ATP + CoA = succinyl-CoA + ADP + phosphate. It catalyses the reaction GTP + succinate + CoA = succinyl-CoA + GDP + phosphate. Its pathway is carbohydrate metabolism; tricarboxylic acid cycle; succinate from succinyl-CoA (ligase route): step 1/1. In terms of biological role, succinyl-CoA synthetase functions in the citric acid cycle (TCA), coupling the hydrolysis of succinyl-CoA to the synthesis of either ATP or GTP and thus represents the only step of substrate-level phosphorylation in the TCA. The beta subunit provides nucleotide specificity of the enzyme and binds the substrate succinate, while the binding sites for coenzyme A and phosphate are found in the alpha subunit. The sequence is that of Succinate--CoA ligase [ADP-forming] subunit beta from Francisella tularensis subsp. tularensis (strain WY96-3418).